The sequence spans 640 residues: MSMSRGSVCRRCLLTMKSMAGGGPTSTYAQQRGKKTWHGPKYQAKIDQAQADWEERAEKIKKGEIQHTWDMFVERGYVKDTAGSHETIRKLMLHKRIGAYTGIDPTAPSLHIGHLLPLMPIFWMYMHGYAGYTLIGGATAKIGDPTDRLVSRTPLKRTDLTMNLTKIHYQLKALWMNVEEQARRRGFEKDWAWKRAVVNNSTWWNSLPLIEVLKRLGDSMRMGPLLSRDTVKNKMSKGDGMSFSEFTYPLMQGWDWWHMYQANGIQMQIGGSDQYGNIVTGVETVKVVRDNEPDPAKKIEGGPFNDPVGFTVPLLTDSAGVKFGKSAGNAFLDKFQTSEFDLYGYFVRRSDQEVEKLLKLFTFLPMENINEAMKIHSENPARRVAQHLLAFEVVGLVHGMNAAHRTALNHQARYGKQIDIPGVTLRMPKAATEDTPPSILDAPKMDMQLPESLIMGKSIGRILYAAGLAKSASEGHRLATQQGAYIGAMPGHKRTEDNKVMDYSQLSFTPIKLWFPQETRNYLIDGKLLILRKGKVQIRVIEMVSDEEWKESGQTYPGEPGTGALRMLRQQLKMLKSGMLTPDEVKANLKNHVEEEAPPPGFMKFPDQDSYAIRRATQELMDEIHQKEVGGDSPREERRE.

L-tyrosine is bound at residue tyrosine 100. An ATP-binding site is contributed by aspartate 104. The 'HIGH' region signature appears at 105–114; the sequence is PTAPSLHIGH. Positions 144, 248, 252, 255, and 274 each coordinate L-tyrosine. The 'KMSKS' region signature appears at 322-326; sequence KFGKS. Lysine 325 lines the ATP pocket.

The protein belongs to the class-I aminoacyl-tRNA synthetase family.

The protein resides in the mitochondrion matrix. The catalysed reaction is tRNA(Tyr) + L-tyrosine + ATP = L-tyrosyl-tRNA(Tyr) + AMP + diphosphate + H(+). Its function is as follows. Has both an aminoacyl-tRNA synthetase activity and is involved in the splicing of group I introns. This is Tyrosine--tRNA ligase, mitochondrial (YTS1) from Podospora anserina (Pleurage anserina).